A 261-amino-acid polypeptide reads, in one-letter code: CD40 ligand (261 aa).

Over 1 to 22 the chain is Cytoplasmic; sequence MIETYNQTSPRSAATGLPISMK. Residues 23–46 form a helical; Signal-anchor for type II membrane protein membrane-spanning segment; the sequence is IFMYLLTVFLITQMIGSALFAVYL. Over 47–261 the chain is Extracellular; it reads HRRLDKIEDE…GFTSFGLLKL (215 aa). Residues 122–261 form the THD domain; the sequence is IAAHVISEAS…GFTSFGLLKL (140 aa). Cysteine 178 and cysteine 218 are oxidised to a cystine. N-linked (GlcNAc...) (complex) asparagine; alternate glycosylation is present at asparagine 240. A glycan (N-linked (GlcNAc...) (high mannose) asparagine; alternate) is linked at asparagine 240.

It belongs to the tumor necrosis factor family. As to quaternary structure, homotrimer. Interacts with isoform 3 of CD28. CD40 ligand, soluble form: Exists as either a monomer or a homotrimer. Forms a ternary complex between CD40 and integrins for CD40-CD40LG signaling. In terms of processing, the soluble form derives from the membrane form by proteolytic processing. Post-translationally, N-linked glycan is a mixture of high mannose and complex type. Glycan structure does not influence binding affinity to CD40. Not O-glycosylated. In terms of tissue distribution, specifically expressed on activated CD4+ T-lymphocytes.

It localises to the cell membrane. The protein resides in the cell surface. The protein localises to the secreted. Its function is as follows. Cytokine that acts as a ligand to CD40/TNFRSF5. Costimulates T-cell proliferation and cytokine production. Its cross-linking on T-cells generates a costimulatory signal which enhances the production of IL4 and IL10 in conjunction with the TCR/CD3 ligation and CD28 costimulation. Induces the activation of NF-kappa-B. Induces the activation of kinases MAPK8 and PAK2 in T-cells. Induces tyrosine phosphorylation of isoform 3 of CD28. Mediates B-cell proliferation in the absence of co-stimulus as well as IgE production in the presence of IL4. Involved in immunoglobulin class switching. Acts as a ligand for integrins, specifically ITGA5:ITGB1 and ITGAV:ITGB3; both integrins and the CD40 receptor are required for activation of CD40-CD40LG signaling, which have cell-type dependent effects, such as B-cell activation, NF-kappa-B signaling and anti-apoptotic signaling. The sequence is that of CD40 ligand (CD40LG) from Homo sapiens (Human).